The primary structure comprises 473 residues: Peptidoglycan DL-endopeptidase CwlO (473 aa).

Residues 1–30 form the signal peptide; it reads MRKSLITLGLASVIGTSSFLIPFTSKTASA. Disordered stretches follow at residues 31–52, 79–98, and 237–337; these read ETLD…SSIE, ALDT…KTKE, and EASE…GTVI. Residues 33–44 show a composition bias toward basic and acidic residues; it reads LDEKKQKIESKQ. Over residues 241 to 250 the composition is skewed to polar residues; it reads LANQKANTEA. 2 stretches are compositionally biased toward basic and acidic residues: residues 251–260 and 267–277; these read EQARIKKEQE and KKQEEAQKASD. Residues 291–337 are compositionally biased toward low complexity; the sequence is SSKASSSDDSSDNSSDNSSNGSSNSSSNGSSSKKSSGSNSNSGGTVI. Residues 340-471 form the NlpC/P60 domain; the sequence is SGGIEGAISV…AAFKGVVRRV (132 aa). The active-site Nucleophile is C377. The Proton acceptor role is filled by H431. Residue N443 is part of the active site.

The protein belongs to the peptidase C40 family. Identified in the extracellular proteome as a number of processing products of about 50 and 30 kDa.

It localises to the secreted. The protein resides in the cell wall. With respect to regulation, detected in exponentially growing cells, the 50 and 30 kDa processing products disappear upon entry into stationary phase with the concomitant appearance of a 20 kDa products. The 50 kDa form persists in the absence of extracellular proteases. In terms of biological role, the C-terminal part of CwlO shows a cell wall hydrolytic DL-endopeptidase activity. The chain is Peptidoglycan DL-endopeptidase CwlO (cwlO) from Bacillus subtilis (strain 168).